Here is a 2121-residue protein sequence, read N- to C-terminus: Non-reducing polyketide synthase aoiG (2121 aa).

The 254-residue stretch at 5-258 folds into the Starter acyltransferase (SAT) domain; the sequence is YIFGDQTVRV…LPVSIYAPYH (254 aa). The region spanning 386–817 is the Ketosynthase family 3 (KS3) domain; sequence SSKIAIIGFS…GGNTAVLVED (432 aa). Catalysis depends on for beta-ketoacyl synthase activity residues C558, H693, and H735. The Malonyl-CoA:ACP transacylase (MAT) domain occupies 921–1239; it reads FLFTGQGAQQ…LSVLHLAGVR (319 aa). The N-terminal hotdog fold stretch occupies residues 1302–1433; the sequence is QKILEEEMTA…CTIELQRPHQ (132 aa). A PKS/mFAS DH domain is found at 1302–1608; the sequence is QKILEEEMTA…FQKVARRVLE (307 aa). H1334 (proton acceptor; for dehydratase activity) is an active-site residue. Positions 1461 to 1608 are C-terminal hotdog fold; that stretch reads THKMRRGVAY…FQKVARRVLE (148 aa). D1519 (proton donor; for dehydratase activity) is an active-site residue. Residues 1646–1723 form the Carrier 1 domain; the sequence is PHVEDAWQQV…SLRIYLNMSS (78 aa). Residue S1683 is modified to O-(pantetheine 4'-phosphoryl)serine. Residues 1728–1752 are compositionally biased toward low complexity; it reads DSIETSSYPTPDESTTTTITSPSGS. Residues 1728–1760 form a disordered region; the sequence is DSIETSSYPTPDESTTTTITSPSGSDRNVGRNS. One can recognise a Carrier 2 domain in the interval 1763–1840; sequence DGVGTTVGLV…AITAALHAIF (78 aa). S1800 bears the O-(pantetheine 4'-phosphoryl)serine mark. Residues 1872-1976 are TE/CLC (thioesterase/Claisen cyclase) domain; that stretch reads TLFLFPDGSG…ILIDSPNPMG (105 aa).

Requires pantetheine 4'-phosphate as cofactor.

In terms of biological role, non-reducing polyketide synthase; part of the gene cluster that mediates the biosynthesis of a methylated derivative of known natural products orthosporin and diaporthin. AoiG catalyzes the biosynthesis of the hexaketide isocoumarin scaffold, via condensation of one acetyl-CoA starter unit with 6 malonyl-CoA units. An oxidoreductase that has still to be identified catalyzes the stereospecific reduction of the carbonyl moiety of the hexaketide isocoumarin scaffold to generate the S-configured secondary alcohol at C-11 of orthosporin. The methyltrasferase aoiF then catalyzes the biotransformation of not only orthosporin to diaporthin but also diaporthin to the final product, by performing a tandem methylation of the polyketide core. This is Non-reducing polyketide synthase aoiG from Aspergillus oryzae (strain ATCC 42149 / RIB 40) (Yellow koji mold).